The sequence spans 359 residues: DNA integrity scanning protein DisA (359 aa).

Positions E10–I148 constitute a DAC domain. Residues G77, L95, and M108–T112 each bind ATP.

The protein belongs to the DisA family. In terms of assembly, homooctamer. Mg(2+) serves as cofactor.

The enzyme catalyses 2 ATP = 3',3'-c-di-AMP + 2 diphosphate. Participates in a DNA-damage check-point that is active prior to asymmetric division when DNA is damaged. DisA forms globular foci that rapidly scan along the chromosomes during sporulation, searching for lesions. When a lesion is present, DisA pauses at the lesion site. This triggers a cellular response that culminates in a temporary block in sporulation initiation. In terms of biological role, also has diadenylate cyclase activity, catalyzing the condensation of 2 ATP molecules into cyclic di-AMP (c-di-AMP). c-di-AMP acts as a signaling molecule that couples DNA integrity with progression of sporulation. The rise in c-di-AMP level generated by DisA while scanning the chromosome, operates as a positive signal that advances sporulation; upon encountering a lesion, the DisA focus arrests at the damaged site and halts c-di-AMP synthesis. This Bacillus pumilus (strain SAFR-032) protein is DNA integrity scanning protein DisA.